The primary structure comprises 430 residues: MKKKPFYKVLYVQVIFAIIVGVILGHFYPSIATDMKPLGDGFIKLIKMVIGPIIFCTVVTGIAGMEDMKKVGRVGGKALLYFEIVSTFALLLGLAATHLLRPGVGFNIDPATLDGKAVASYAAKAHGQSTVDFLMHIIPNTMVDAFAQGEILQILLIALLFGSVLAHLGERGKVVTDFIDGLTRVLFGIVHIVTKLAPIGAFGAMAFTIGKYGVGSLVPLLKLIGTFYLTSVVFVLVVLGAIARFTGFSIIRFVSYIKEELLIVLGTSSSEAALPQLMEKLEKAGCSRSVVGLVVPTGYSFNLDGTNIYMTMAVLFIAQATNIELTWMQQLTLLAVAMLTSKGASGVTGAGFITLAATLAVVPTIPLSGMVLILGIDRFMSECRALTNIVGNGVATVVVSAWEKELDRNKLRQALKGGGEVAPTETTAGV.

The next 8 membrane-spanning stretches (helical) occupy residues 9–29 (VLYV…HFYP), 45–65 (LIKM…IAGM), 79–99 (LLYF…ATHL), 149–169 (GEIL…AHLG), 185–205 (VLFG…FGAM), 223–243 (LIGT…GAIA), 308–328 (IYMT…LTWM), and 356–376 (AATL…ILGI).

It belongs to the dicarboxylate/amino acid:cation symporter (DAACS) (TC 2.A.23) family.

It localises to the cell inner membrane. In terms of biological role, responsible for the transport of dicarboxylates such as succinate, fumarate, and malate from the periplasm across the membrane. The sequence is that of C4-dicarboxylate transport protein from Burkholderia orbicola (strain AU 1054).